Here is a 208-residue protein sequence, read N- to C-terminus: Protein-methionine-sulfoxide reductase heme-binding subunit MsrQ (208 aa).

Transmembrane regions (helical) follow at residues 16–36, 53–73, 82–102, 118–138, 156–176, and 178–198; these read IAVF…FVGG, WGLI…LWGW, MVGL…IGLD, TYIT…VTST, LVYP…KADL, and EPLI…VPAV.

It belongs to the MsrQ family. Heterodimer of a catalytic subunit (MsrP) and a heme-binding subunit (MsrQ). It depends on FMN as a cofactor. Heme b is required as a cofactor.

The protein localises to the cell inner membrane. Part of the MsrPQ system that repairs oxidized periplasmic proteins containing methionine sulfoxide residues (Met-O), using respiratory chain electrons. Thus protects these proteins from oxidative-stress damage caused by reactive species of oxygen and chlorine generated by the host defense mechanisms. MsrPQ is essential for the maintenance of envelope integrity under bleach stress, rescuing a wide series of structurally unrelated periplasmic proteins from methionine oxidation. MsrQ provides electrons for reduction to the reductase catalytic subunit MsrP, using the quinone pool of the respiratory chain. The protein is Protein-methionine-sulfoxide reductase heme-binding subunit MsrQ of Rhodospirillum rubrum (strain ATCC 11170 / ATH 1.1.1 / DSM 467 / LMG 4362 / NCIMB 8255 / S1).